Here is a 259-residue protein sequence, read N- to C-terminus: Dihydroorotate dehydrogenase B (NAD(+)), electron transfer subunit (259 aa).

Residues 2–102 (MQKQNMIVVN…LGPLGHGFPV (101 aa)) enclose the FAD-binding FR-type domain. FAD contacts are provided by residues 53 to 56 (RPIS), 70 to 72 (LYR), and 77 to 78 (GT). Positions 221, 226, 229, and 246 each coordinate [2Fe-2S] cluster.

This sequence belongs to the PyrK family. As to quaternary structure, heterotetramer of 2 PyrK and 2 PyrD type B subunits. Requires [2Fe-2S] cluster as cofactor. FAD serves as cofactor.

Its pathway is pyrimidine metabolism; UMP biosynthesis via de novo pathway; orotate from (S)-dihydroorotate (NAD(+) route): step 1/1. Functionally, responsible for channeling the electrons from the oxidation of dihydroorotate from the FMN redox center in the PyrD type B subunit to the ultimate electron acceptor NAD(+). This chain is Dihydroorotate dehydrogenase B (NAD(+)), electron transfer subunit, found in Bacillus cereus (strain G9842).